Consider the following 284-residue polypeptide: Pantothenate synthetase (284 aa).

ATP is bound at residue 30–37; it reads MGNLHDGH. The active-site Proton donor is the His37. A (R)-pantoate-binding site is contributed by Gln61. Gln61 provides a ligand contact to beta-alanine. Residue 149-152 participates in ATP binding; the sequence is GEKD. A (R)-pantoate-binding site is contributed by Gln155. Residues Ile178 and 186–189 each bind ATP; that span reads LSSR.

This sequence belongs to the pantothenate synthetase family. Homodimer.

Its subcellular location is the cytoplasm. It catalyses the reaction (R)-pantoate + beta-alanine + ATP = (R)-pantothenate + AMP + diphosphate + H(+). Its pathway is cofactor biosynthesis; (R)-pantothenate biosynthesis; (R)-pantothenate from (R)-pantoate and beta-alanine: step 1/1. Catalyzes the condensation of pantoate with beta-alanine in an ATP-dependent reaction via a pantoyl-adenylate intermediate. The protein is Pantothenate synthetase of Salmonella heidelberg (strain SL476).